Here is a 186-residue protein sequence, read N- to C-terminus: CASP-like protein ARALYDRAFT_316979 (186 aa).

The Cytoplasmic portion of the chain corresponds to 1–23 (MRRNGDGEEVVAKRRRRIKELVQ). A helical membrane pass occupies residues 24-44 (VALRGGCLAASATAMAVMLTA). The Extracellular segment spans residues 45-70 (TEEGVADIYGFKLTLSSNWSFSPSYQ). A glycan (N-linked (GlcNAc...) asparagine) is linked at Asn62. The helical transmembrane segment at 71–91 (YVVGACTGTVLYSLFQLCLGV) threads the bilayer. At 92-115 (YRLLTGSPITPSRFQAWLCFTSDQ) the chain is on the cytoplasmic side. A helical membrane pass occupies residues 116 to 132 (LFGYLMMSAGSAGSGVT). Residues 133 to 161 (NLNKTGIRHTPLPDFCKTLSSFCNHVALS) are Extracellular-facing. Asn135 carries N-linked (GlcNAc...) asparagine glycosylation. A helical transmembrane segment spans residues 162–182 (LLLVFLSFIFLASSSFFTVLV). At 183–186 (LSTP) the chain is on the cytoplasmic side.

It belongs to the Casparian strip membrane proteins (CASP) family. Homodimer and heterodimers.

The protein resides in the cell membrane. The polypeptide is CASP-like protein ARALYDRAFT_316979 (Arabidopsis lyrata subsp. lyrata (Lyre-leaved rock-cress)).